The following is a 130-amino-acid chain: uncharacterized protein (130 aa).

Residues 8–28 (PFILMIIVLGLFLVSIGGYYY) form a helical membrane-spanning segment.

Its subcellular location is the membrane. This is an uncharacterized protein from Bacillus anthracis.